A 209-amino-acid chain; its full sequence is Pyridoxine/pyridoxamine 5'-phosphate oxidase (209 aa).

Residues 7-10 (REDY) and Lys64 contribute to the substrate site. Residues 59 to 64 (RIVLLK), 74 to 75 (FT), Arg80, and Lys81 each bind FMN. 3 residues coordinate substrate: Tyr121, Arg125, and Ser129. FMN is bound by residues 138 to 139 (QS) and Trp182. 188–190 (RLH) lines the substrate pocket. Residue Arg192 coordinates FMN.

It belongs to the pyridoxamine 5'-phosphate oxidase family. In terms of assembly, homodimer. It depends on FMN as a cofactor.

The enzyme catalyses pyridoxamine 5'-phosphate + O2 + H2O = pyridoxal 5'-phosphate + H2O2 + NH4(+). It carries out the reaction pyridoxine 5'-phosphate + O2 = pyridoxal 5'-phosphate + H2O2. Its pathway is cofactor metabolism; pyridoxal 5'-phosphate salvage; pyridoxal 5'-phosphate from pyridoxamine 5'-phosphate: step 1/1. It functions in the pathway cofactor metabolism; pyridoxal 5'-phosphate salvage; pyridoxal 5'-phosphate from pyridoxine 5'-phosphate: step 1/1. Its function is as follows. Catalyzes the oxidation of either pyridoxine 5'-phosphate (PNP) or pyridoxamine 5'-phosphate (PMP) into pyridoxal 5'-phosphate (PLP). This Actinobacillus pleuropneumoniae serotype 3 (strain JL03) protein is Pyridoxine/pyridoxamine 5'-phosphate oxidase.